The primary structure comprises 378 residues: Chaperone protein DnaJ (378 aa).

Positions 3–67 constitute a J domain; it reads DYYDLLGVSK…QTRGRYDQFG (65 aa). The CR-type zinc-finger motif lies at 133 to 215; sequence GQEREIKIPH…CAGQGVRQVR (83 aa). Residues Cys-146, Cys-149, Cys-163, Cys-166, Cys-189, Cys-192, Cys-203, and Cys-206 each contribute to the Zn(2+) site. CXXCXGXG motif repeat units follow at residues 146–153, 163–170, 189–196, and 203–210; these read CDTCNGTG, CSTCGGVG, CPSCEGTG, and CPACAGQG.

It belongs to the DnaJ family. Homodimer. It depends on Zn(2+) as a cofactor.

The protein resides in the cytoplasm. In terms of biological role, participates actively in the response to hyperosmotic and heat shock by preventing the aggregation of stress-denatured proteins and by disaggregating proteins, also in an autonomous, DnaK-independent fashion. Unfolded proteins bind initially to DnaJ; upon interaction with the DnaJ-bound protein, DnaK hydrolyzes its bound ATP, resulting in the formation of a stable complex. GrpE releases ADP from DnaK; ATP binding to DnaK triggers the release of the substrate protein, thus completing the reaction cycle. Several rounds of ATP-dependent interactions between DnaJ, DnaK and GrpE are required for fully efficient folding. Also involved, together with DnaK and GrpE, in the DNA replication of plasmids through activation of initiation proteins. The sequence is that of Chaperone protein DnaJ from Prochlorococcus marinus (strain MIT 9313).